Here is a 254-residue protein sequence, read N- to C-terminus: Imidazole glycerol phosphate synthase subunit HisF (254 aa).

Active-site residues include D12 and D131.

This sequence belongs to the HisA/HisF family. As to quaternary structure, heterodimer of HisH and HisF.

The protein localises to the cytoplasm. The enzyme catalyses 5-[(5-phospho-1-deoxy-D-ribulos-1-ylimino)methylamino]-1-(5-phospho-beta-D-ribosyl)imidazole-4-carboxamide + L-glutamine = D-erythro-1-(imidazol-4-yl)glycerol 3-phosphate + 5-amino-1-(5-phospho-beta-D-ribosyl)imidazole-4-carboxamide + L-glutamate + H(+). It participates in amino-acid biosynthesis; L-histidine biosynthesis; L-histidine from 5-phospho-alpha-D-ribose 1-diphosphate: step 5/9. IGPS catalyzes the conversion of PRFAR and glutamine to IGP, AICAR and glutamate. The HisF subunit catalyzes the cyclization activity that produces IGP and AICAR from PRFAR using the ammonia provided by the HisH subunit. This Desulfitobacterium hafniense (strain Y51) protein is Imidazole glycerol phosphate synthase subunit HisF.